A 55-amino-acid chain; its full sequence is uncharacterized protein (55 aa).

This is an uncharacterized protein from Saccharomyces cerevisiae (strain ATCC 204508 / S288c) (Baker's yeast).